The sequence spans 260 residues: MSTNNSVLVLKVGGALLQCEMGMARLMDTAAAMIADGQQVLMVHGGGCLVDEQLAANGMETVKLEGLRVTPPEQMPIIAGALAGTSNKILQGAATKAGIVSVGMSLADGNTVSAKIKDERLGLVGEVSPKDATYLKFILSQGWMPICSSIAMMDDGQMLNVNADQAATVLAKLVGGKLVLLSDVSGVLDGKGQLIPSLNGKQIAELVKQGVIEKGMKVKVEAALEVAQWMGQAVQVASWRDASQLVALAKGEAVGTQIQP.

Substrate contacts are provided by residues 46-47, Arg-68, and Asn-160; that span reads GG.

It belongs to the acetylglutamate kinase family. ArgB subfamily.

The protein resides in the cytoplasm. It catalyses the reaction N-acetyl-L-glutamate + ATP = N-acetyl-L-glutamyl 5-phosphate + ADP. It participates in amino-acid biosynthesis; L-arginine biosynthesis; N(2)-acetyl-L-ornithine from L-glutamate: step 2/4. Catalyzes the ATP-dependent phosphorylation of N-acetyl-L-glutamate. This Shewanella sp. (strain MR-4) protein is Acetylglutamate kinase.